A 227-amino-acid chain; its full sequence is 7-cyano-7-deazaguanine synthase (227 aa).

7-17 serves as a coordination point for ATP; the sequence is VSGGMDSLVAT. 4 residues coordinate Zn(2+): C187, C195, C198, and C201.

The protein belongs to the QueC family. The cofactor is Zn(2+).

The enzyme catalyses 7-carboxy-7-deazaguanine + NH4(+) + ATP = 7-cyano-7-deazaguanine + ADP + phosphate + H2O + H(+). It functions in the pathway purine metabolism; 7-cyano-7-deazaguanine biosynthesis. Catalyzes the ATP-dependent conversion of 7-carboxy-7-deazaguanine (CDG) to 7-cyano-7-deazaguanine (preQ(0)). The protein is 7-cyano-7-deazaguanine synthase of Chlorobaculum parvum (strain DSM 263 / NCIMB 8327) (Chlorobium vibrioforme subsp. thiosulfatophilum).